The primary structure comprises 308 residues: Olfactory receptor 2T6 (308 aa).

Residues 1–28 lie on the Extracellular side of the membrane; the sequence is MNENNETLTRGFTLMGLFTHNKCSGFFF. N-linked (GlcNAc...) asparagine glycosylation occurs at Asn-5. A helical transmembrane segment spans residues 29 to 49; it reads GVICAVFFMAMIANGVMIFLI. The Cytoplasmic segment spans residues 50–57; sequence NIDPHLHT. A helical membrane pass occupies residues 58-78; the sequence is PMYFLLSHLSVIDTLYISTIV. Residues 79 to 98 lie on the Extracellular side of the membrane; that stretch reads PKMLVDYLMGEGTISFIACT. A disulfide bridge connects residues Cys-97 and Cys-179. A helical membrane pass occupies residues 99–119; the sequence is AQCFLYMGFMGAEFFLLGLMA. The Cytoplasmic segment spans residues 120-145; sequence YDRYVAICNPLRYPVLISWRVCWMIL. Residues 146–166 form a helical membrane-spanning segment; that stretch reads ASSWFGGALDSFLLTPITMSL. Topologically, residues 167–203 are extracellular; the sequence is PFCASHQINHFFCEAPTMLRLACGDKTTYETVMYVCC. A helical membrane pass occupies residues 204 to 224; the sequence is VAMLLIPFSVVTASYTRILIT. The Cytoplasmic portion of the chain corresponds to 225–236; it reads VHQMTSAEGRKK. A helical membrane pass occupies residues 237–257; the sequence is AFATCSSHMMVVTLFYGAALY. Residues 258–271 lie on the Extracellular side of the membrane; sequence TYTLPQSYHTPIKD. Residues 272–292 form a helical membrane-spanning segment; that stretch reads KVFSAFYTILTPLLNPLIYSL. Residues 293–308 are Cytoplasmic-facing; the sequence is RNRDVMGALKRVVARC.

Belongs to the G-protein coupled receptor 1 family.

Its subcellular location is the cell membrane. Functionally, odorant receptor. This chain is Olfactory receptor 2T6 (OR2T6), found in Homo sapiens (Human).